Consider the following 35-residue polypeptide: Photosystem II reaction center protein M (35 aa).

The chain crosses the membrane as a helical span at residues 5–25 (ILAFIATALFILVPTAFLLII).

It belongs to the PsbM family. In terms of assembly, PSII is composed of 1 copy each of membrane proteins PsbA, PsbB, PsbC, PsbD, PsbE, PsbF, PsbH, PsbI, PsbJ, PsbK, PsbL, PsbM, PsbT, PsbX, PsbY, PsbZ, Psb30/Ycf12, at least 3 peripheral proteins of the oxygen-evolving complex and a large number of cofactors. It forms dimeric complexes.

The protein localises to the plastid. The protein resides in the chloroplast thylakoid membrane. One of the components of the core complex of photosystem II (PSII). PSII is a light-driven water:plastoquinone oxidoreductase that uses light energy to abstract electrons from H(2)O, generating O(2) and a proton gradient subsequently used for ATP formation. It consists of a core antenna complex that captures photons, and an electron transfer chain that converts photonic excitation into a charge separation. This subunit is found at the monomer-monomer interface. This Panax quinquefolius (American ginseng) protein is Photosystem II reaction center protein M.